Consider the following 1102-residue polypeptide: Coiled-coil domain-containing protein AGAP005037 (1102 aa).

Residues 1–11 (MLIRWKSKDKS) show a composition bias toward basic and acidic residues. Disordered stretches follow at residues 1 to 69 (MLIR…HTLG) and 295 to 318 (HKSK…RGMY). Residues 12–21 (SSSTSSSSST) show a composition bias toward low complexity. Positions 50–65 (IDDRRRSARSREDPRR) are enriched in basic and acidic residues. The stretch at 405–430 (HRIRVEHMERQLANLTGLVQKALTQN) forms a coiled coil. Disordered stretches follow at residues 450 to 475 (RNAE…STCH) and 489 to 539 (DIQG…PLVM). 2 coiled-coil regions span residues 554 to 579 (EVYN…LRRL) and 614 to 654 (DKER…EVIN). Disordered stretches follow at residues 745-774 (LPIP…PSPR), 832-958 (TKIS…CSDN), and 1031-1087 (LCGG…TLPP). Positions 832–849 (TKISQSQLYPSEPVSSNV) are enriched in polar residues. A compositionally biased stretch (pro residues) spans 867-881 (PPQPTRPTTGKPPVP). The segment covering 904-918 (TSSRSPLASPTSPHV) has biased composition (low complexity). Residues 936 to 958 (DCEQQQRTSEGTDSGSESVCSDN) show a composition bias toward polar residues.

This is Coiled-coil domain-containing protein AGAP005037 from Anopheles gambiae (African malaria mosquito).